Reading from the N-terminus, the 249-residue chain is tRNA (guanine-N(1)-)-methyltransferase (249 aa).

S-adenosyl-L-methionine contacts are provided by residues glycine 113 and 133–138 (IGDFVV).

The protein belongs to the RNA methyltransferase TrmD family. As to quaternary structure, homodimer.

Its subcellular location is the cytoplasm. It catalyses the reaction guanosine(37) in tRNA + S-adenosyl-L-methionine = N(1)-methylguanosine(37) in tRNA + S-adenosyl-L-homocysteine + H(+). Functionally, specifically methylates guanosine-37 in various tRNAs. This Neisseria meningitidis serogroup C / serotype 2a (strain ATCC 700532 / DSM 15464 / FAM18) protein is tRNA (guanine-N(1)-)-methyltransferase.